Reading from the N-terminus, the 203-residue chain is Small ribosomal subunit protein uS4 (203 aa).

The segment at 1 to 46 (MSKRQSAKYKLDRRMGENIWGRPKSPVNRREYGPGQHGQRRKGKMS) is disordered. In terms of domain architecture, S4 RNA-binding spans 94-157 (RRLDAVVYRA…QEMALVAEAQ (64 aa)).

Belongs to the universal ribosomal protein uS4 family. Part of the 30S ribosomal subunit. Contacts protein S5. The interaction surface between S4 and S5 is involved in control of translational fidelity.

In terms of biological role, one of the primary rRNA binding proteins, it binds directly to 16S rRNA where it nucleates assembly of the body of the 30S subunit. Its function is as follows. With S5 and S12 plays an important role in translational accuracy. The sequence is that of Small ribosomal subunit protein uS4 from Sphingopyxis alaskensis (strain DSM 13593 / LMG 18877 / RB2256) (Sphingomonas alaskensis).